The primary structure comprises 423 residues: Sulfate adenylyltransferase (423 aa).

Residues Gln-207 and Arg-209 each contribute to the sulfate site. ATP contacts are provided by residues 207-210 (QLRN) and 301-304 (GRDH). Active-site residues include Arg-209 and Asn-210. Position 305 (Ala-305) interacts with sulfate.

This sequence belongs to the sulfate adenylyltransferase family.

The protein resides in the mitosome. It catalyses the reaction sulfate + ATP + H(+) = adenosine 5'-phosphosulfate + diphosphate. Its pathway is sulfur metabolism; hydrogen sulfide biosynthesis; sulfite from sulfate: step 1/3. Catalyzes the first intracellular reaction of sulfate assimilation, forming adenosine-5'-phosphosulfate (APS) from inorganic sulfate and ATP. This is Sulfate adenylyltransferase from Entamoeba histolytica (strain ATCC 30459 / HM-1:IMSS / ABRM).